The chain runs to 317 residues: UDP-3-O-acylglucosamine N-acyltransferase (317 aa).

Histidine 229 functions as the Proton acceptor in the catalytic mechanism.

It belongs to the transferase hexapeptide repeat family. LpxD subfamily. In terms of assembly, homotrimer.

It catalyses the reaction a UDP-3-O-[(3R)-3-hydroxyacyl]-alpha-D-glucosamine + a (3R)-hydroxyacyl-[ACP] = a UDP-2-N,3-O-bis[(3R)-3-hydroxyacyl]-alpha-D-glucosamine + holo-[ACP] + H(+). Its pathway is bacterial outer membrane biogenesis; LPS lipid A biosynthesis. Its function is as follows. Catalyzes the N-acylation of UDP-3-O-acylglucosamine using 3-hydroxyacyl-ACP as the acyl donor. Is involved in the biosynthesis of lipid A, a phosphorylated glycolipid that anchors the lipopolysaccharide to the outer membrane of the cell. In Campylobacter concisus (strain 13826), this protein is UDP-3-O-acylglucosamine N-acyltransferase.